Reading from the N-terminus, the 188-residue chain is Dual specificity protein phosphatase 18 (188 aa).

The Tyrosine-protein phosphatase domain maps to 19–160; that stretch reads GLSQITKSLY…LIHYEFQLFG (142 aa). The Phosphocysteine intermediate role is filled by Cys104.

It belongs to the protein-tyrosine phosphatase family. Non-receptor class dual specificity subfamily. As to expression, widely expressed with highest levels in liver, brain, ovary and testis.

The protein localises to the cytoplasm. It is found in the nucleus. Its subcellular location is the mitochondrion inner membrane. It carries out the reaction O-phospho-L-tyrosyl-[protein] + H2O = L-tyrosyl-[protein] + phosphate. The catalysed reaction is O-phospho-L-seryl-[protein] + H2O = L-seryl-[protein] + phosphate. The enzyme catalyses O-phospho-L-threonyl-[protein] + H2O = L-threonyl-[protein] + phosphate. With respect to regulation, activated by manganese ions, inhibited by iodoacetic acid. Can dephosphorylate single and diphosphorylated synthetic MAPK peptides, with preference for the phosphotyrosine and diphosphorylated forms over phosphothreonine. In vitro, dephosphorylates p-nitrophenyl phosphate (pNPP). This Homo sapiens (Human) protein is Dual specificity protein phosphatase 18 (DUSP18).